The primary structure comprises 134 residues: Transcription antitermination protein NusB (134 aa).

This sequence belongs to the NusB family.

Its function is as follows. Involved in transcription antitermination. Required for transcription of ribosomal RNA (rRNA) genes. Binds specifically to the boxA antiterminator sequence of the ribosomal RNA (rrn) operons. The protein is Transcription antitermination protein NusB of Shewanella oneidensis (strain ATCC 700550 / JCM 31522 / CIP 106686 / LMG 19005 / NCIMB 14063 / MR-1).